The following is a 729-amino-acid chain: Glutamine synthetase (729 aa).

In terms of domain architecture, GS beta-grasp spans 85-174 (THYTHWFQPL…IPTIFISYTG (90 aa)). Positions 179–615 (YKTPLLKALA…VLGDLAINHI (437 aa)) constitute a GS catalytic domain. 4 residues coordinate Mg(2+): Glu215, Glu217, Glu286, and Glu293. Residues 337 to 338 (NG) and Gly338 contribute to the L-glutamate site. His342 contacts Mg(2+). ATP is bound by residues Ser346 and Arg458. Arg458 is a binding site for L-glutamate.

The protein belongs to the glutamine synthetase family. As to quaternary structure, homohexamer. Mg(2+) serves as cofactor.

It localises to the cytoplasm. The catalysed reaction is L-glutamate + NH4(+) + ATP = L-glutamine + ADP + phosphate + H(+). Inhibited by L-histidine (46%), L-arginine (38%) and L-methionine-DL-sulphoximine. The activity of this enzyme is not controlled by adenylation. In terms of biological role, catalyzes the ATP-dependent biosynthesis of glutamine from glutamate and ammonia. The polypeptide is Glutamine synthetase (Bacteroides fragilis (strain YCH46)).